An 87-amino-acid polypeptide reads, in one-letter code: Small ribosomal subunit protein uS17 (87 aa).

This sequence belongs to the universal ribosomal protein uS17 family. As to quaternary structure, part of the 30S ribosomal subunit.

Its function is as follows. One of the primary rRNA binding proteins, it binds specifically to the 5'-end of 16S ribosomal RNA. The protein is Small ribosomal subunit protein uS17 of Alkalilimnicola ehrlichii (strain ATCC BAA-1101 / DSM 17681 / MLHE-1).